A 354-amino-acid chain; its full sequence is Inactive ADP-ribosyltransferase ARH2 (354 aa).

Ser-27 is subject to Phosphoserine.

The protein belongs to the ADP-ribosylglycohydrolase family.

The protein localises to the cytoplasm. The protein resides in the myofibril. It localises to the sarcomere. Functionally, required for myofibril assembly and outgrowth of the cardiac chambers in the developing heart. Appears to be catalytically inactive, showing no activity against O-acetyl-ADP-ribose. The chain is Inactive ADP-ribosyltransferase ARH2 (ADPRHL1) from Pongo abelii (Sumatran orangutan).